Here is a 382-residue protein sequence, read N- to C-terminus: Gap junction alpha-1 protein (382 aa).

Residues 2–23 (GDWSALGKLLDKVQAYSTAGGK) are Cytoplasmic-facing. Ser-5 is modified (phosphoserine). Residues 24–44 (VWLSVLFIFRILLLGTAVESA) form a helical membrane-spanning segment. Residues 45–76 (WGDEQSAFRCNTQQPGCENVCYDKSFPISHVR) are Extracellular-facing. 2 disulfides stabilise this stretch: Cys-54–Cys-192 and Cys-187–Cys-198. The helical transmembrane segment at 77-97 (FWVLQIIFVSVPTLLYLAHVF) threads the bilayer. Residues 98–155 (YVMRKEEKLNKKEEELKVAQTDGVNVEMHLKQIEIKKFKYGIEEHGKVKMRGGLLRTY) are Cytoplasmic-facing. Lys-144 participates in a covalent cross-link: Glycyl lysine isopeptide (Lys-Gly) (interchain with G-Cter in SUMO). The helical transmembrane segment at 156 to 176 (IISILFKSIFEVAFLLIQWYI) threads the bilayer. At 177 to 207 (YGFSLSAVYTCKRDPCPHQVDCFLSRPTEKT) the chain is on the extracellular side. Residues 208 to 228 (IFIIFMLVVSLVSLALNIIEL) traverse the membrane as a helical segment. The Cytoplasmic segment spans residues 229–382 (FYVFFKGVKD…SRPRPDDLEI (154 aa)). Lys-237 participates in a covalent cross-link: Glycyl lysine isopeptide (Lys-Gly) (interchain with G-Cter in SUMO). Residues 244–382 (SDPYHTTSGA…SRPRPDDLEI (139 aa)) form an interaction with NOV region. Tyr-247 is modified (phosphotyrosine). Ser-255 and Ser-262 each carry phosphoserine. The tract at residues 264-382 (KYAYFNGCSS…SRPRPDDLEI (119 aa)) is interaction with UBQLN4. Cys-271 carries the post-translational modification S-nitrosocysteine. Thr-275 is modified (phosphothreonine). Phosphoserine occurs at positions 306 and 314. Over residues 317–332 (QNRMGQAGSTISNSHA) the composition is skewed to polar residues. Residues 317–382 (QNRMGQAGST…SRPRPDDLEI (66 aa)) are disordered. Position 325 is a phosphoserine; by CK1 (Ser-325). Thr-326 carries the phosphothreonine modification. 2 positions are modified to phosphoserine; by CK1: Ser-328 and Ser-330. Phosphoserine is present on residues Ser-344 and Ser-365. Residues 362 to 374 (RPSSRASSRASSR) show a composition bias toward low complexity. At Ser-368 the chain carries Phosphoserine; by PKC/PRKCG and PKC/PRKCD. Phosphoserine occurs at positions 369 and 373.

This sequence belongs to the connexin family. Alpha-type (group II) subfamily. A connexon is composed of a hexamer of connexins. Interacts with SGSM3. Interacts with RIC1/CIP150. Interacts with CNST and CSNK1D. Interacts (via C-terminus) with TJP1. Interacts (via C-terminus) with SRC (via SH3 domain). Interacts (not ubiquitinated) with UBQLN4 (via UBA domain). Interacts with NOV. Interacts with TMEM65. Interacts with ANK3/ANKG and PKP2. Post-translationally, phosphorylation at Ser-325, Ser-328 and Ser-330 by CK1 modulates gap junction assembly. Phosphorylated at Ser-368 by PRKCG; phosphorylation induces disassembly of gap junction plaques and inhibition of gap junction activity. Phosphorylation at Ser-368 by PRKCD triggers its internalization into small vesicles leading to proteasome-mediated degradation. Sumoylated with SUMO1, SUMO2 and SUMO3, which may regulate the level of functional Cx43 gap junctions at the plasma membrane. May be desumoylated by SENP1 or SENP2. In terms of processing, S-nitrosylation at Cys-271 is enriched at the muscle endothelial gap junction in arteries, it augments channel permeability and may regulate of smooth muscle cell to endothelial cell communication. Post-translationally, acetylated in the developing cortex; leading to delocalization from the cell membrane.

It localises to the cell membrane. The protein resides in the cell junction. Its subcellular location is the gap junction. The protein localises to the endoplasmic reticulum. Functionally, gap junction protein that acts as a regulator of bladder capacity. A gap junction consists of a cluster of closely packed pairs of transmembrane channels, the connexons, through which materials of low MW diffuse from one cell to a neighboring cell. May play a critical role in the physiology of hearing by participating in the recycling of potassium to the cochlear endolymph. Negative regulator of bladder functional capacity: acts by enhancing intercellular electrical and chemical transmission, thus sensitizing bladder muscles to cholinergic neural stimuli and causing them to contract. May play a role in cell growth inhibition through the regulation of NOV expression and localization. Plays an essential role in gap junction communication in the ventricles. This chain is Gap junction alpha-1 protein (GJA1), found in Chlorocebus aethiops (Green monkey).